A 345-amino-acid polypeptide reads, in one-letter code: Nicotinate-nucleotide--dimethylbenzimidazole phosphoribosyltransferase (345 aa).

Glu311 (proton acceptor) is an active-site residue.

It belongs to the CobT family.

The catalysed reaction is 5,6-dimethylbenzimidazole + nicotinate beta-D-ribonucleotide = alpha-ribazole 5'-phosphate + nicotinate + H(+). The protein operates within nucleoside biosynthesis; alpha-ribazole biosynthesis; alpha-ribazole from 5,6-dimethylbenzimidazole: step 1/2. Its function is as follows. Catalyzes the synthesis of alpha-ribazole-5'-phosphate from nicotinate mononucleotide (NAMN) and 5,6-dimethylbenzimidazole (DMB). This Janthinobacterium sp. (strain Marseille) (Minibacterium massiliensis) protein is Nicotinate-nucleotide--dimethylbenzimidazole phosphoribosyltransferase.